The chain runs to 399 residues: Aromatic-amino-acid aminotransferase (399 aa).

The substrate site is built by Gly36, Tyr67, Trp132, and Asn184. Lys247 is modified (N6-(pyridoxal phosphate)lysine). Arg375 serves as a coordination point for substrate.

It belongs to the class-I pyridoxal-phosphate-dependent aminotransferase family. As to quaternary structure, homodimer. Pyridoxal 5'-phosphate serves as cofactor.

The protein resides in the cytoplasm. It carries out the reaction an aromatic L-alpha-amino acid + 2-oxoglutarate = an aromatic oxo-acid + L-glutamate. In Pseudomonas aeruginosa (strain ATCC 15692 / DSM 22644 / CIP 104116 / JCM 14847 / LMG 12228 / 1C / PRS 101 / PAO1), this protein is Aromatic-amino-acid aminotransferase (phhC).